Here is a 988-residue protein sequence, read N- to C-terminus: Vacuolar sorting protein 18 (988 aa).

One copy of the CHCR repeat lies at 589–749 (NKNLNPRRLI…VVKQEKGAKR (161 aa)). Residues 785–819 (KEAICSSLEDYNKQIEQLKEEMNDATRGADNIRND) adopt a coiled-coil conformation. Residues 836–886 (CGVCKRKILMMSGDFRMAQGYSSAGPLAPFYVFPCGHSFHAQCLITHVTSC) form an RING-type; degenerate zinc finger.

The protein belongs to the VPS18 family. In terms of assembly, core component of at least two putative endosomal tethering complexes, the homotypic fusion and vacuole protein sorting (HOPS) complex and the class C core vacuole/endosome tethering (CORVET) complex. Their common core is composed of the class C Vps proteins VPS11, VCL1, VPS18 and VPS33, which in HOPS further associates with VPS39 and VPS41 and in CORVET with VPS3.

It localises to the endosome membrane. Its subcellular location is the vacuole membrane. It is found in the cytoplasm. In terms of biological role, essential protein required during embryogenesis. Believed to act as a core component of the putative HOPS endosomal tethering complex and of the class C core vacuole/endosome tethering (CORVET) complex. CORVET is required for vacuolar transport of SYP22. HOPS is required for the central vacuole formation. Involved in root development. Plays a role in vesicle-mediated protein trafficking to lysosomal compartments including the endocytic membrane transport pathways. This chain is Vacuolar sorting protein 18, found in Arabidopsis thaliana (Mouse-ear cress).